Reading from the N-terminus, the 290-residue chain is 33 kDa chaperonin (290 aa).

2 cysteine pairs are disulfide-bonded: Cys231–Cys233 and Cys264–Cys267.

Belongs to the HSP33 family. Post-translationally, under oxidizing conditions two disulfide bonds are formed involving the reactive cysteines. Under reducing conditions zinc is bound to the reactive cysteines and the protein is inactive.

Its subcellular location is the cytoplasm. In terms of biological role, redox regulated molecular chaperone. Protects both thermally unfolding and oxidatively damaged proteins from irreversible aggregation. Plays an important role in the bacterial defense system toward oxidative stress. This Photorhabdus laumondii subsp. laumondii (strain DSM 15139 / CIP 105565 / TT01) (Photorhabdus luminescens subsp. laumondii) protein is 33 kDa chaperonin.